Here is a 289-residue protein sequence, read N- to C-terminus: MKKLSFQQIILILQNYWQDYGCAILQPYDAHVGAGTFHPATVLRCLGDKPWFIAYVQPSRRPGDSRYGMHPNRMQHYYQFQVILKPSPDNIQDLYLKSLESLDLDLKTHDIRFVEDDWESPTLGASGLGWEIWCDGMEVSQFTYMQQIGGIECYPVACEITYGLERLALYIQGIDEVKELDWNGQIGEKALKYGEVDFEAERQFSKYNLEFADSEMLLRRFKDSVEQCERLVKVNLPMPAYDECLKASHYFNQLNALGVISVTERASYVLRVRDLARICCIKWLELSSE.

It belongs to the class-II aminoacyl-tRNA synthetase family. In terms of assembly, tetramer of two alpha and two beta subunits.

The protein localises to the cytoplasm. The catalysed reaction is tRNA(Gly) + glycine + ATP = glycyl-tRNA(Gly) + AMP + diphosphate. The sequence is that of Glycine--tRNA ligase alpha subunit (glyQ) from Rickettsia prowazekii (strain Madrid E).